We begin with the raw amino-acid sequence, 288 residues long: Phosphatidylserine decarboxylase proenzyme (288 aa).

Residues Asp-95, His-152, and Ser-255 each act as charge relay system; for autoendoproteolytic cleavage activity in the active site. Residue Ser-255 is the Schiff-base intermediate with substrate; via pyruvic acid; for decarboxylase activity of the active site. At Ser-255 the chain carries Pyruvic acid (Ser); by autocatalysis.

Belongs to the phosphatidylserine decarboxylase family. PSD-B subfamily. Prokaryotic type I sub-subfamily. Heterodimer of a large membrane-associated beta subunit and a small pyruvoyl-containing alpha subunit. Pyruvate is required as a cofactor. Is synthesized initially as an inactive proenzyme. Formation of the active enzyme involves a self-maturation process in which the active site pyruvoyl group is generated from an internal serine residue via an autocatalytic post-translational modification. Two non-identical subunits are generated from the proenzyme in this reaction, and the pyruvate is formed at the N-terminus of the alpha chain, which is derived from the carboxyl end of the proenzyme. The autoendoproteolytic cleavage occurs by a canonical serine protease mechanism, in which the side chain hydroxyl group of the serine supplies its oxygen atom to form the C-terminus of the beta chain, while the remainder of the serine residue undergoes an oxidative deamination to produce ammonia and the pyruvoyl prosthetic group on the alpha chain. During this reaction, the Ser that is part of the protease active site of the proenzyme becomes the pyruvoyl prosthetic group, which constitutes an essential element of the active site of the mature decarboxylase.

The protein resides in the cell membrane. The catalysed reaction is a 1,2-diacyl-sn-glycero-3-phospho-L-serine + H(+) = a 1,2-diacyl-sn-glycero-3-phosphoethanolamine + CO2. It functions in the pathway phospholipid metabolism; phosphatidylethanolamine biosynthesis; phosphatidylethanolamine from CDP-diacylglycerol: step 2/2. Catalyzes the formation of phosphatidylethanolamine (PtdEtn) from phosphatidylserine (PtdSer). The sequence is that of Phosphatidylserine decarboxylase proenzyme from Methylococcus capsulatus (strain ATCC 33009 / NCIMB 11132 / Bath).